The following is a 1129-amino-acid chain: Protein TPR1 (1129 aa).

The region spanning 4–36 is the LisH domain; that stretch reads LSRELVFLILQFLDEEKFKETVHKLEQESGFFF. The region spanning 34–92 is the CTLH domain; the sequence is FFFNMKYFEEKVHAGEWDEVEKYLSGFTKVDDNRYSMKIFFEIRKQKYLEALDRHDRAK. 11 WD repeats span residues 337-377, 398-437, 443-485, 487-527, 579-618, 623-662, 762-801, 829-867, 870-910, 913-952, and 1005-1044; these read SQGS…RLFS, ESSI…ETRQ, AHSG…FSFE, HEAP…SRVD, KKSA…MLSS, GGLP…RTLR, DQAS…QNPS, NPED…VMTT, PPPP…VKTR, GHQR…KKKS, and ALSA…LRCR. The segment at 1092–1129 is disordered; it reads LESEGKWGTTPPTENGVPNGRTSTSSATSNPAADQIQR. The span at 1113 to 1129 shows a compositional bias: low complexity; the sequence is TSTSSATSNPAADQIQR.

In terms of assembly, tetramer. Interacts with D53. Interacts with WOX1. Interacts with MOF1. As to expression, expressed in panicles, stems, leaves, spikelets and seed endosperm.

Functionally, probable downstream regulator of strigolactones signaling. The sequence is that of Protein TPR1 from Oryza sativa subsp. japonica (Rice).